Reading from the N-terminus, the 231-residue chain is NADH-ubiquinone oxidoreductase chain 4 (231 aa).

Helical transmembrane passes span 1–21 (PIAGSMVLAAILLKLGGYGII), 34–54 (TFLPFLVLALWGAILANLTCL), 61–80 (SLIAYSSISHMGLVVAAIII), 84–106 (WGLSGAMALMIAHGFTSSALFCL), 118–138 (ILILTRGFHNILPMATTWWLL), and 156–178 (LLIMSTLFNWCPTTIILLGLSML).

The protein belongs to the complex I subunit 4 family.

The protein resides in the mitochondrion membrane. It catalyses the reaction a ubiquinone + NADH + 5 H(+)(in) = a ubiquinol + NAD(+) + 4 H(+)(out). In terms of biological role, core subunit of the mitochondrial membrane respiratory chain NADH dehydrogenase (Complex I) that is believed to belong to the minimal assembly required for catalysis. Complex I functions in the transfer of electrons from NADH to the respiratory chain. The immediate electron acceptor for the enzyme is believed to be ubiquinone. The chain is NADH-ubiquinone oxidoreductase chain 4 (MT-ND4) from Trimeresurus albolabris (White-lipped pit viper).